The chain runs to 135 residues: ATP synthase epsilon chain (135 aa).

This sequence belongs to the ATPase epsilon chain family. In terms of assembly, F-type ATPases have 2 components, CF(1) - the catalytic core - and CF(0) - the membrane proton channel. CF(1) has five subunits: alpha(3), beta(3), gamma(1), delta(1), epsilon(1). CF(0) has three main subunits: a, b and c.

The protein resides in the cell inner membrane. Functionally, produces ATP from ADP in the presence of a proton gradient across the membrane. This Mesorhizobium japonicum (strain LMG 29417 / CECT 9101 / MAFF 303099) (Mesorhizobium loti (strain MAFF 303099)) protein is ATP synthase epsilon chain.